We begin with the raw amino-acid sequence, 65 residues long: Large ribosomal subunit protein bL35 (65 aa).

The protein belongs to the bacterial ribosomal protein bL35 family.

In Proteus mirabilis (strain HI4320), this protein is Large ribosomal subunit protein bL35.